Reading from the N-terminus, the 216-residue chain is LHFPL tetraspan subfamily member 3 protein (216 aa).

The next 4 helical transmembrane spans lie at 22-42 (IGVLWAIFTTLFAIVNVVCFV), 96-116 (FFIGMSMVLVLSCIGCFALFF), 126-146 (ICGWMQLAAGTCLVLGCMIYP), and 177-197 (ILAIMGILDALILSFLAFVLG).

The protein belongs to the LHFP family.

The protein localises to the membrane. This Danio rerio (Zebrafish) protein is LHFPL tetraspan subfamily member 3 protein.